The primary structure comprises 179 residues: Large ribosomal subunit protein uL6 (179 aa).

Belongs to the universal ribosomal protein uL6 family. As to quaternary structure, part of the 50S ribosomal subunit.

Its function is as follows. This protein binds to the 23S rRNA, and is important in its secondary structure. It is located near the subunit interface in the base of the L7/L12 stalk, and near the tRNA binding site of the peptidyltransferase center. In Prochlorococcus marinus (strain MIT 9211), this protein is Large ribosomal subunit protein uL6.